Reading from the N-terminus, the 250-residue chain is mRNA-decapping protein g5R (250 aa).

Positions 97 to 243 (QKFRKNWLLP…IIGPAFNFIK (147 aa)) constitute a Nudix hydrolase domain. The Nudix box motif lies at 132–153 (GKPKEDESDLTCAIREFEEETG). Residue Glu-138 participates in Mg(2+) binding. Residue Glu-147 is the Nucleophile of the active site. Positions 151 and 173 each coordinate Mg(2+).

It belongs to the Nudix hydrolase family. DIPP subfamily. In terms of assembly, interacts with host RPL23A. Mg(2+) is required as a cofactor. Mn(2+) serves as cofactor.

It localises to the host rough endoplasmic reticulum. It carries out the reaction diphospho-myo-inositol polyphosphate + H2O = myo-inositol polyphosphate + phosphate.. Decapping enzyme required for the removal of the 5'-end m7GpppN cap tethered to viral and host mRNAs to allow their decay in cells. May therefore accelerate viral and cellular mRNA turnover to eliminate competing host mRNAs and allow stage-specific synthesis of viral proteins. Acceleration of the turnover of cellular transcripts may even promote the shutoff of host protein synthesis. In addition to the mRNA cap, g5R also efficiently hydrolyzes diphosphoinositol polyphosphates. Down-regulation of the level of PP-InsP5 (diphosphoinositol pentakisphosphate) may play a role in viral manipulation of the cellular secretory pathway, a step necessary for the formation of virions. Binds viral and cellular poly(A) mRNAs, thereby decreasing both types of mRNAs. The sequence is that of mRNA-decapping protein g5R from African swine fever virus (isolate Tick/South Africa/Pretoriuskop Pr4/1996) (ASFV).